Here is a 502-residue protein sequence, read N- to C-terminus: Probable cytosol aminopeptidase (502 aa).

Mn(2+)-binding residues include Lys-269 and Asp-274. Lys-281 is an active-site residue. Mn(2+) contacts are provided by Asp-292, Asp-351, and Glu-353. Residue Arg-355 is part of the active site.

It belongs to the peptidase M17 family. Mn(2+) is required as a cofactor.

The protein localises to the cytoplasm. It carries out the reaction Release of an N-terminal amino acid, Xaa-|-Yaa-, in which Xaa is preferably Leu, but may be other amino acids including Pro although not Arg or Lys, and Yaa may be Pro. Amino acid amides and methyl esters are also readily hydrolyzed, but rates on arylamides are exceedingly low.. The enzyme catalyses Release of an N-terminal amino acid, preferentially leucine, but not glutamic or aspartic acids.. Its function is as follows. Presumably involved in the processing and regular turnover of intracellular proteins. Catalyzes the removal of unsubstituted N-terminal amino acids from various peptides. This Shewanella loihica (strain ATCC BAA-1088 / PV-4) protein is Probable cytosol aminopeptidase.